The sequence spans 384 residues: Cysteine protease ATG4B (384 aa).

Residue C74 is the Nucleophile of the active site. Residues D269 and H271 contribute to the active site. Residues F379 to L382 carry the LIR motif.

It belongs to the peptidase C54 family.

It is found in the cytoplasm. The protein localises to the cytosol. The protein resides in the cytoplasmic vesicle. It localises to the autophagosome. Its subcellular location is the endoplasmic reticulum. It is found in the mitochondrion. It catalyses the reaction [protein]-C-terminal L-amino acid-glycyl-phosphatidylethanolamide + H2O = [protein]-C-terminal L-amino acid-glycine + a 1,2-diacyl-sn-glycero-3-phosphoethanolamine. It carries out the reaction [protein]-C-terminal L-amino acid-glycyl-phosphatidylserine + H2O = [protein]-C-terminal L-amino acid-glycine + a 1,2-diacyl-sn-glycero-3-phospho-L-serine. In terms of biological role, cysteine protease that plays a key role in autophagy by mediating both proteolytic activation and delipidation of ATG8 family proteins. Required for canonical autophagy (macroautophagy), non-canonical autophagy as well as for mitophagy. The protease activity is required for proteolytic activation of ATG8 family proteins: cleaves the C-terminal amino acid of ATG8 proteins to reveal a C-terminal glycine. Exposure of the glycine at the C-terminus is essential for ATG8 proteins conjugation to phosphatidylethanolamine (PE) and insertion to membranes, which is necessary for autophagy. Protease activity is also required to counteract formation of high-molecular weight conjugates of ATG8 proteins (ATG8ylation): acts as a deubiquitinating-like enzyme that removes ATG8 conjugated to other proteins, such as ATG3. In addition to the protease activity, also mediates delipidation of ATG8 family proteins. Catalyzes delipidation of PE-conjugated forms of ATG8 proteins during macroautophagy. Also involved in non-canonical autophagy, a parallel pathway involving conjugation of ATG8 proteins to single membranes at endolysosomal compartments, by catalyzing delipidation of ATG8 proteins conjugated to phosphatidylserine (PS). The protein is Cysteine protease ATG4B of Xenopus laevis (African clawed frog).